Reading from the N-terminus, the 304-residue chain is N-acetylmuramic acid 6-phosphate etherase (304 aa).

The region spanning 62–225 is the SIS domain; sequence IVTAFRQGGR…TTASMILMGK (164 aa). Glu-90 acts as the Proton donor in catalysis. The active site involves Glu-121.

The protein belongs to the GCKR-like family. MurNAc-6-P etherase subfamily. As to quaternary structure, homodimer.

It carries out the reaction N-acetyl-D-muramate 6-phosphate + H2O = N-acetyl-D-glucosamine 6-phosphate + (R)-lactate. It functions in the pathway amino-sugar metabolism; 1,6-anhydro-N-acetylmuramate degradation. It participates in amino-sugar metabolism; N-acetylmuramate degradation. Its pathway is cell wall biogenesis; peptidoglycan recycling. In terms of biological role, specifically catalyzes the cleavage of the D-lactyl ether substituent of MurNAc 6-phosphate, producing GlcNAc 6-phosphate and D-lactate. Together with AnmK, is also required for the utilization of anhydro-N-acetylmuramic acid (anhMurNAc) either imported from the medium or derived from its own cell wall murein, and thus plays a role in cell wall recycling. In Actinobacillus succinogenes (strain ATCC 55618 / DSM 22257 / CCUG 43843 / 130Z), this protein is N-acetylmuramic acid 6-phosphate etherase.